We begin with the raw amino-acid sequence, 193 residues long: Cerebellin-1 (193 aa).

A signal peptide spans 1–21; it reads MLGVVELLLLGAAWLAGPARG. A glycan (N-linked (GlcNAc...) asparagine) is linked at N23. The essential for interaction with NRXN1 and linker of two C1q trimers into disulfide-linked hexamers stretch occupies residues 34–38; the sequence is CLVVC. The C1q domain maps to 57-193; sequence SGSAKVAFSA…TFSGFLVFPL (137 aa). Positions 62–193 are necessary for interaction with CBLN3, and homotrimerization; it reads VAFSAIRSTN…TFSGFLVFPL (132 aa). N79 is a glycosylation site (N-linked (GlcNAc...) asparagine). The tract at residues 122 to 147 is essential for interaction with GRID2; sequence YNRQTIQVSLMLNGWPVISAFAGDQD.

In terms of assembly, homohexamer; disulfide-linked homotrimers. The trimers are assembled via the globular C1q domains. The trimers associate via N-terminal cysteine residues to form disulfide-linked hexamers. May form oligomers with CBLN2, CBLN3 and CBLN4 prior to secretion. Once secreted, does not interact with other CBLN family members. Interacts with GRID1. Interacts with NRXN1 and NRXN2 long (alpha) and short (beta) isoforms produced by alternative promoter usage. Competes with NLGN1 for NRXN1-binding. Weakly interacts with NRXN3 short isoform and not at all with NRXN3 long isoform. Interacts (via C1q domain) with GRID2; GRID2-binding is calcium-independent; CBLN1 hexamers anchor GRID2 N-terminal domain dimers to monomeric NRXN1 isoform beta; promotes synaptogenesis and mediates the D-Serine-dependent long term depression signals and AMPA receptor endocytosis. The proteolytic processing to yield cerebellin seems to occur either prior to the secretion by presynaptic neurons and subsequent oligomerization or in some other location after release of the mature protein. In terms of processing, sialoglycoprotein.

It is found in the secreted. Its subcellular location is the postsynaptic cell membrane. In terms of biological role, required for synapse integrity and synaptic plasticity. During cerebellar synapse formation, essential for the matching and maintenance of pre- and post-synaptic elements at parallel fiber-Purkinje cell synapses, the establishment of the proper pattern of climbing fiber-Purkinje cell innervation, and induction of long-term depression at parallel fiber-Purkinje cell synapses. Plays a role as a synaptic organizer that acts bidirectionally on both pre- and post-synaptic components. On the one hand induces accumulation of synaptic vesicles in the pre-synaptic part by binding with NRXN1 and in other hand induces clustering of GRID2 and its associated proteins at the post-synaptic site through association of GRID2. NRXN1-CBLN1-GRID2 complex directly induces parallel fiber protrusions that encapsulate spines of Purkinje cells leading to accumulation of GRID2 and synaptic vesicles. Required for CBLN3 export from the endoplasmic reticulum and secretion. NRXN1-CBLN1-GRID2 complex mediates the D-Serine-dependent long term depression signals and AMPA receptor endocytosis. Essential for long-term maintenance but not establishment of excitatory synapses. Inhibits the formation and function of inhibitory GABAergic synapses in cerebellar Purkinje cells. The cerebellin peptide exerts neuromodulatory functions. Directly stimulates norepinephrine release via the adenylate cyclase/PKA-dependent signaling pathway; and indirectly enhances adrenocortical secretion in vivo, through a paracrine mechanism involving medullary catecholamine release. The sequence is that of Cerebellin-1 from Bos taurus (Bovine).